The primary structure comprises 229 residues: Deoxyribose-phosphate aldolase (229 aa).

Asp-96 serves as the catalytic Proton donor/acceptor. The Schiff-base intermediate with acetaldehyde role is filled by Lys-166. Lys-195 functions as the Proton donor/acceptor in the catalytic mechanism.

It belongs to the DeoC/FbaB aldolase family. DeoC type 1 subfamily.

Its subcellular location is the cytoplasm. The enzyme catalyses 2-deoxy-D-ribose 5-phosphate = D-glyceraldehyde 3-phosphate + acetaldehyde. It participates in carbohydrate degradation; 2-deoxy-D-ribose 1-phosphate degradation; D-glyceraldehyde 3-phosphate and acetaldehyde from 2-deoxy-alpha-D-ribose 1-phosphate: step 2/2. Its function is as follows. Catalyzes a reversible aldol reaction between acetaldehyde and D-glyceraldehyde 3-phosphate to generate 2-deoxy-D-ribose 5-phosphate. This is Deoxyribose-phosphate aldolase from Micrococcus luteus (strain ATCC 4698 / DSM 20030 / JCM 1464 / CCM 169 / CCUG 5858 / IAM 1056 / NBRC 3333 / NCIMB 9278 / NCTC 2665 / VKM Ac-2230) (Micrococcus lysodeikticus).